The primary structure comprises 98 residues: MHFRTVNTPARLQFISRFVLQPLRPLLHYKDHTIRTAAEAGLDVAELAVGPAFVVARGYFTLRQADTSSAESRDPTKQQQLWEKTLEWLGMTEEQGAL.

It functions in the pathway secondary metabolite biosynthesis. Functionally, dehydrogenase; part of the gene cluster that mediates the biosynthesis of aculins. The pathway begins with the synthesis of 6-methylsalicylic acid by the polyketide synthase (PKS) acuA via condensation of acetate and malonate units. The 6-methylsalicylic acid decarboxylase acuB then catalyzes the decarboxylation of 6-methylsalicylic acid to yield m-cresol (also known as 3-methylphenol). These first reactions occur in the cytosol. The intermediate m-cresol is then transported into the endoplasmic reticulum where the cytochrome P450 monooxygenase acuC converts it to m-hydroxybenzyl alcohol, which is further converted to gentisyl alcohol by the cytochrome P450 monooxygenase acuD. Gentisyl alcohol is further oxidized by the oxidoreductase acuE that probably catalyzes hydroxylation of the aromatic ring. The aromatic system might then be opened by oxidation through a Baeyer-Villiger type of oxidation, which could be catalyzed by acuF, with the carboxylic acid at C-1 subsequently reduced to an aldehyde by acuG. Subsequently, a hemiacetal is formed, before the dehydrogenase acuH would reduce the double bond between C-4 and C-6. Finally, keto-enol tautomerism results in formation of aculinic acid, which exists as two diastereomers (both R/S configurations at C-1) by non-enzymatic hemiacetal formation. The carboxypeptidase acuI could be involved in the linking of aculinic acid to an aculene A moiety produced by the aculene biosynthesis cluster and which leads to the production of aculin A. AcuI may also be involved in the attachment of proline to aculinic acid to form epi-aculins A and B. This Aspergillus aculeatus (strain ATCC 16872 / CBS 172.66 / WB 5094) protein is Dehydrogenase acuH.